Reading from the N-terminus, the 624-residue chain is METASRRDHFPNQQLSQTIAQRFAQKSFTPLELYCFNCVFRSLADTESGVHYWSETTLCRFLELPDALGVGSVIFQMASYLGAFPLPSQAPAILTYEALLKVVTILTERYGAVVKKRGREIWLREIYRSLAIYDKGIRSSLEDKEKEKEKDVPAPVSSGNMGFAVDAPDDGDEGDEDEDDELVLAALDSMDAIDAFKHGEQSNVHHSIIPTDNFLKLVELLLLIAPIDAQQSLSTLAPDLSDTRVAELRRAAHVIISSFGVENHPGVTYRTFNAVISTCLPYLFNGLNPLFEHFLFAKDMDLSKRKGGPNSPTKESKPVIPPPKAQSEPILREPGEILNLTILSQLSFFLKGSDLFRRLRPLYSGNTHGFSMGSFEKQVFNWRAPTILLVKGRLLPTTPSTTRERALQDMLPPKRHPSSITPDSLSSNQTLIYGAYISSQWKHTGKTCFGDASTTLFQLSPTHDVFTASAFSHDYTYFSKSPTTPAGLGLGTPIPTQSASHSSHSHSHSHPVFRPGPVSLHLDDALEFAVFTHLAEGGGSFLPSKLPARKGSDWQDRFEIESLEVWGCGGDEVAEEQRRTWAWEEREAEARRRVNLGTGDQEMDRELLKMAGVISGDRSGGSMG.

Residues 143–152 (DKEKEKEKDV) are compositionally biased toward basic and acidic residues. Disordered stretches follow at residues 143–177 (DKEKEKEKDVPAPVSSGNMGFAVDAPDDGDEGDED), 305–328 (RKGGPNSPTKESKPVIPPPKAQSE), and 488–512 (LGLGTPIPTQSASHSSHSHSHSHPV). Over residues 167–177 (APDDGDEGDED) the composition is skewed to acidic residues. The TLDc domain occupies 336–569 (EILNLTILSQ…IESLEVWGCG (234 aa)).

The protein belongs to the RTC5 family.

It localises to the cytoplasm. May be involved in a process influencing telomere capping. The sequence is that of Restriction of telomere capping protein 5 (rtc5) from Pyrenophora tritici-repentis (strain Pt-1C-BFP) (Wheat tan spot fungus).